The following is a 6930-amino-acid chain: Replicase polyprotein 1ab (6930 aa).

The CoV Nsp1 globular domain maps to 10–131 (LKSMVVTTLK…DIDIQIRKYG (122 aa)). A BetaCoV Nsp1 C-terminal domain is found at 149–175 (DPGPDVGPYLDFPDNCCPTKPKAKRGG). Residues 177 to 431 (VYLSDQYGFD…ELVEYLIEGI (255 aa)) enclose the CoV Nsp2 N-terminal domain. Zn(2+) contacts are provided by Cys312, Cys315, Cys331, and Cys333. A C4 region spans residues 312-333 (CSYCDYYGWTPLKDIGTVNCLC). In terms of domain architecture, CoV Nsp2 middle spans 432–644 (RVDADTLDNP…CDLLTTIMSK (213 aa)). The CoV Nsp2 C-terminal domain occupies 646–772 (LTSVKWAGCK…LGKAFRLRGG (127 aa)). The 111-residue stretch at 775 to 885 (SKVTFGDEEV…MYFSLEDAVP (111 aa)) folds into the Ubiquitin-like 1 domain. A Macro 1 domain is found at 930–1097 (MTTPCGYTKI…LYERALATSF (168 aa)). The disordered stretch occupies residues 1188-1207 (KRPPPIVPQQTVEQQPQEIS). Low complexity predominate over residues 1195–1206 (PQQTVEQQPQEI). The Macro 2 domain occupies 1216–1340 (LVDVVSMSFS…LYRAYFNGVF (125 aa)). The 73-residue stretch at 1345–1417 (TAVQDFVVDI…VSKARAYLET (73 aa)) folds into the DPUP domain. A Ubiquitin-like 2 domain is found at 1423–1478 (EPLIKVLTTVDGINYSTVLVSTAQSYRAQIGTVFCDGHDWSNKNPMPTDEGTHLYK). Positions 1492-1757 (EYYGVDDSNI…RTTIDPDFSK (266 aa)) constitute a Peptidase C16 domain. Cys1533 serves as the catalytic For PL-PRO activity. Residues Cys1610, Cys1613, Cys1645, and Cys1647 each contribute to the Zn(2+) site. The segment at 1610–1647 (CEHCGVSQMVFTGTDACTFYGSVVLDDLYAPVSVVCQC) adopts a C4-type zinc-finger fold. Catalysis depends on for PL-PRO activity residues His1694 and Asp1708. One can recognise a Nucleic acid-binding domain in the interval 1770–1870 (PIEVVAAPKL…PLLSTVVVNT (101 aa)). One can recognise a G2M domain in the interval 1883 to 2012 (PVNNETSEEP…KTADFVRSTN (130 aa)). The next 3 membrane-spanning stretches (helical) occupy residues 2015 to 2035 (SKCV…WLLV), 2040 to 2060 (IVKV…TCVL), and 2081 to 2101 (YMLY…WLSE). The segment at 2015-2238 (SKCVGLLCLF…IVIAFLWLCY (224 aa)) is HD1. Positions 2105–2162 (PSLVTRFKYFLGIVMPCDYVLVNETGTGWLHHLCMAGMDSLDYPALRMQQHRYGSPYN) constitute a 3Ecto domain. Cys2121 and Cys2138 form a disulfide bridge. Helical transmembrane passes span 2162-2182 (NYTY…YTPA), 2183-2203 (LPIV…PIPL), and 2218-2238 (LVPF…WLCY). The segment at 2239 to 2329 (KGFLHVRYGC…QFKRPIIHTD (91 aa)) is Y1. In terms of domain architecture, CoV Nsp3 Y spans 2239 to 2610 (KGFLHVRYGC…MVTPFKIIGG (372 aa)). The Zn(2+) site is built by His2243, Cys2248, Cys2253, Cys2256, Cys2289, His2292, Cys2296, and Cys2299. A ZF1 region spans residues 2243 to 2256 (HVRYGCNNVACLMC). Residues 2289 to 2299 (CTKHNWNCVSC) are ZF2. Residues 2330-2425 (EAYYEVTSVE…LVDKRMVGVV (96 aa)) form a Y2 region. The interval 2330 to 2610 (EAYYEVTSVE…MVTPFKIIGG (281 aa)) is coV-Y. Residues 2426-2509 (GDDATIARAM…SCIRLCHQEG (84 aa)) are Y3. The interval 2510–2610 (WEWTTDSWNN…MVTPFKIIGG (101 aa)) is Y4. 7 helical membrane-spanning segments follow: residues 2621–2641 (LIHV…PWYI), 2719–2739 (VGTT…SVCY), 2865–2885 (AFDL…AVDI), 2887–2907 (TSIL…YYLL), 2916–2936 (YSGV…VLCL), 2946–2966 (IYAM…ACMM), and 2970–2990 (FLIM…IVVV). The segment at 2621–2990 (LIHVFMLLVV…WVTVLYIVVV (370 aa)) is HD2. The region spanning 3007 to 3103 (VQVGDLAFHS…RCSVASAALQ (97 aa)) is the Nsp4C domain. Residues 3104–3409 (AGLTRMAHPS…GRQMLGVKLQ (306 aa)) form the Peptidase C30 domain. Catalysis depends on for 3CL-PRO activity residues His3144 and Cys3248. 7 consecutive transmembrane segments (helical) span residues 3423 to 3443 (FAII…WTFV), 3449 to 3469 (TLLL…SLLI), 3474 to 3494 (TYLT…NFQY), 3517 to 3537 (VIGT…LLSV), 3569 to 3589 (VAIS…GVAC), 3592 to 3612 (LYAA…ILLL), and 3620 to 3640 (LVCY…FNLI). The tract at residues 3423 to 3640 (FAIIFVLTIL…TCYFGVFNLI (218 aa)) is HD3. Residues 3700 to 3782 (SNMTDLKCTS…SILENNSVLQ (83 aa)) enclose the RdRp Nsp7 cofactor domain. The RdRp Nsp8 cofactor domain maps to 3783–3982 (AVASEFSNLS…QQATSPVKLQ (200 aa)). The region spanning 3983–4094 (NNELMPQTVK…GTLACTVRLH (112 aa)) is the Nsp9 ssRNA-binding domain. The ExoN/MTase coactivator domain maps to 4095–4233 (AGSATEVASN…CSSLREINLQ (139 aa)). Residues Cys4168, Cys4171, His4177, Cys4184, Cys4211, Cys4214, Cys4222, and Cys4224 each contribute to the Zn(2+) site. 2 zinc fingers span residues 4168-4184 (CLYC…SGVC) and 4211-4224 (CAVC…GCPC). Residues 4239 to 4494 (FLNRVRGTSG…AAECHVDGDF (256 aa)) enclose the NiRAN domain. Mn(2+) contacts are provided by Asn4442 and Asp4451. Residues 4499-4597 (RVWDICKYDY…MNQDIRQHAQ (99 aa)) enclose the Nsp12 Interface domain. Zn(2+)-binding residues include His4528, Cys4534, Cys4539, Cys4543, and Cys4720. The region spanning 4598–5165 (RLSLRELLVY…NMYMESATLQ (568 aa)) is the Nsp12 RNA-dependent RNA polymerase domain. A rdRp Fingers N-ter region spans residues 4600–4814 (SLRELLVYAA…HQKMLKSIAA (215 aa)). The segment at 4815 to 4853 (ARGASVVIGTTKFYGGWNRMLRTLCEGVENPHLMGWDYP) is rdRp Palm N-ter. Residues 4845–5007 (PHLMGWDYPK…CYNADYAQKG (163 aa)) enclose the RdRp catalytic domain. Positions 4854–4912 (KCDRAMPNLLRIFASLILARKHATCCNASERFYRLANECAQVLSEMVLCGGGFYVKPGG) are rdRp Fingers C-ter. 3 residues coordinate Zn(2+): His4875, Cys4878, and Cys4879. Residues 4913–5048 (TSSGDSTTAY…TKGPHEFCSQ (136 aa)) form a rdRp Palm C-ter region. Residues Ser4992, Asp4993, and Asp4994 contribute to the active site. The rdRp Thumb stretch occupies residues 5049-5165 (HTMLVDMKGE…NMYMESATLQ (117 aa)). One can recognise a CV ZBD domain in the interval 5166–5278 (SVGTCVVCNS…ADFNSLATCD (113 aa)). Residues Cys5170, Cys5173, Cys5181, Cys5184, Cys5191, Cys5194, His5198, His5204, Cys5215, Cys5220, Cys5237, and His5240 each contribute to the Zn(2+) site. Residues 5412–5603 (TKLVGLYPAM…MVAVGPDIFL (192 aa)) enclose the (+)RNA virus helicase ATP-binding domain. Position 5447 to 5454 (5447 to 5454 (GPPGTGKS)) interacts with ATP. The (+)RNA virus helicase C-terminal domain occupies 5604 to 5778 (ATCYRCPKEI…VTVGLFKDCA (175 aa)). Residues 5838-6056 (LFITREQAIR…RCLAIHDCFC (219 aa)) form the ExoN domain. Active-site residues include Asp5856, Glu5858, and Glu5957. The Zn(2+) site is built by Cys5973, Cys5976, Cys5992, His5995, His6026, Cys6030, and His6033. Catalysis depends on residues His6037 and Asp6042. A Zn(2+)-binding site is contributed by Cys6048. An N7-MTase domain is found at 6065 to 6296 (YPIIANELAI…NLWSTFVKLQ (232 aa)). 6100–6106 (DIGNPKA) is a binding site for S-adenosyl-L-methionine. The segment at 6180–6194 (CNGGSLYVNQHAFHT) is gpppA-binding. Residues Cys6218, Cys6242, Cys6253, and His6256 each contribute to the Zn(2+) site. Positions 6297–6357 (SLENVAYNVL…NVAFELWAKR (61 aa)) constitute a Nsp15 N-terminal oligomerization domain. The AV-Nsp11N/CoV-Nsp15M domain occupies 6358-6476 (SVNVVPEVKL…YAMRKDGAFV (119 aa)). Residues 6493 to 6630 (QPRTQLEIDF…KGGKISTFYP (138 aa)) form the NendoU domain. Residues His6523, His6537, Lys6576, Lys6679, Asp6763, Lys6803, and Glu6836 contribute to the active site. Positions 6635–6928 (KQDWKPGYSM…DIGVRGVACS (294 aa)) constitute a Nidovirus-type SAM-dependent 2'-O-MTase domain.

This sequence belongs to the coronaviruses polyprotein 1ab family. In terms of assembly, interacts with host PHB and PHB2. Interacts with papain-like protease nsp3 and non-structural protein 6. As to quaternary structure, monomer. Homodimer. Only the homodimer shows catalytic activity. In terms of assembly, interacts with nsp8 and nsp12 to form the replication-transcription complex (RTC): nsp12, nsp7, two subunits of nsp8, and up to two subunits of nsp13. Interacts with nsp7, nsp13 and nsp12 to form the replication-transcription complex (RTC): nsp12, nsp7, two subunits of nsp8, and up to two subunits of nsp13. As to quaternary structure, interacts with nsp12. In terms of assembly, interacts with proofreading exoribonuclease nsp14 and 2'-O-methyltransferase nsp16; these interactions enhance nsp14 and nsp16 enzymatic activities. Interacts with nsp7 and nsp8 to form the replication-transcription complex (RTC): nsp12, nsp7, two subunits of nsp8, and up to two subunits of nsp13. Interacts with nsp9. As to quaternary structure, interacts with nsp8 to form the replication-transcription complex (RTC): nsp12, nsp7, two subunits of nsp8, and up to two subunits of nsp13. The cofactor is Mn(2+). Mg(2+) serves as cofactor. Specific enzymatic cleavages in vivo by its own proteases yield mature proteins. 3CL-PRO and PL-PRO proteinases are autocatalytically processed.

It is found in the host membrane. Its subcellular location is the host cytoplasm. It localises to the host perinuclear region. The protein resides in the host endoplasmic reticulum-Golgi intermediate compartment. The enzyme catalyses RNA(n) + a ribonucleoside 5'-triphosphate = RNA(n+1) + diphosphate. It carries out the reaction ATP + H2O = ADP + phosphate + H(+). The catalysed reaction is Thiol-dependent hydrolysis of ester, thioester, amide, peptide and isopeptide bonds formed by the C-terminal Gly of ubiquitin (a 76-residue protein attached to proteins as an intracellular targeting signal).. It catalyses the reaction a 5'-end (N(7)-methyl 5'-triphosphoguanosine)-ribonucleoside in mRNA + S-adenosyl-L-methionine = a 5'-end (N(7)-methyl 5'-triphosphoguanosine)-(2'-O-methyl-ribonucleoside) in mRNA + S-adenosyl-L-homocysteine + H(+). The enzyme catalyses uridylyl-uridylyl-ribonucleotide-RNA = a 3'-end uridylyl-2',3'-cyclophospho-uridine-RNA + a 5'-end dephospho-ribonucleoside-RNA. It carries out the reaction a 5'-end diphospho-ribonucleoside in mRNA + GTP + H(+) = a 5'-end (5'-triphosphoguanosine)-ribonucleoside in mRNA + diphosphate. The catalysed reaction is a 5'-end (5'-triphosphoguanosine)-ribonucleoside in mRNA + S-adenosyl-L-methionine = a 5'-end (N(7)-methyl 5'-triphosphoguanosine)-ribonucleoside in mRNA + S-adenosyl-L-homocysteine. In terms of biological role, the replicase polyprotein of coronaviruses is a multifunctional protein: it contains the activities necessary for the transcription of negative stranded RNA, leader RNA, subgenomic mRNAs and progeny virion RNA as well as proteinases responsible for the cleavage of the polyprotein into functional products. Inhibits host translation by interacting with the 40S ribosomal subunit. The nsp1-40S ribosome complex further induces an endonucleolytic cleavage near the 5'UTR of host mRNAs, targeting them for degradation. Viral mRNAs are not susceptible to nsp1-mediated endonucleolytic RNA cleavage thanks to the presence of a 5'-end leader sequence and are therefore protected from degradation. By suppressing host gene expression, nsp1 facilitates efficient viral gene expression in infected cells and evasion from host immune response. Functionally, may play a role in the modulation of host cell survival signaling pathway by interacting with host PHB and PHB2. Indeed, these two proteins play a role in maintaining the functional integrity of the mitochondria and protecting cells from various stresses. Its function is as follows. Responsible for the cleavages located at the N-terminus of the replicase polyprotein. In addition, PL-PRO possesses a deubiquitinating/deISGylating activity and processes both 'Lys-48'- and 'Lys-63'-linked polyubiquitin chains from cellular substrates. Participates together with nsp4 in the assembly of virally-induced cytoplasmic double-membrane vesicles necessary for viral replication. Antagonizes innate immune induction of type I interferon by blocking the phosphorylation, dimerization and subsequent nuclear translocation of host IRF3. Also prevents host NF-kappa-B signaling. In terms of biological role, participates in the assembly of virally-induced cytoplasmic double-membrane vesicles necessary for viral replication. Cleaves the C-terminus of replicase polyprotein at 11 sites. Recognizes substrates containing the core sequence [ILMVF]-Q-|-[SGACN]. Also able to bind an ADP-ribose-1''-phosphate (ADRP). Functionally, plays a role in the initial induction of autophagosomes from host endoplasmic reticulum. Later, limits the expansion of these phagosomes that are no longer able to deliver viral components to lysosomes. Its function is as follows. Forms a hexadecamer with nsp8 (8 subunits of each) that may participate in viral replication by acting as a primase. Alternatively, may synthesize substantially longer products than oligonucleotide primers. In terms of biological role, forms a hexadecamer with nsp7 (8 subunits of each) that may participate in viral replication by acting as a primase. Alternatively, may synthesize substantially longer products than oligonucleotide primers. Forms a primer, NSP9-pU, which is utilized by the polymerase for the initiation of RNA chains. Interacts with ribosome signal recognition particle RNA (SRP). Together with NSP8, suppress protein integration into the cell membrane, thereby disrupting host immune defenses. Functionally, plays a pivotal role in viral transcription by stimulating both nsp14 3'-5' exoribonuclease and nsp16 2'-O-methyltransferase activities. Therefore plays an essential role in viral mRNAs cap methylation. Its function is as follows. RNA-directed RNA polymerase that catalyzes the transcription of viral genomic and subgenomic RNAs. Acts in complex with nsp7 and nsp8 to transcribe both the minus and positive strands of genomic RNA. The kinase-like NiRAN domain of NSP12 attaches one or more nucleotides to the amino terminus of NSP9, forming a covalent RNA-protein intermediate that serves as transcription/replication primer. Subgenomic RNAs (sgRNAs) are formed by discontinuous transcription: The polymerase has the ability to pause at transcription-regulating sequences (TRS) and jump to the leader TRS, resulting in a major deletion. This creates a series of subgenomic RNAs that are replicated, transcribed and translated. In addition, Nsp12 is a subunit of the viral RNA capping enzyme that catalyzes the RNA guanylyltransferase reaction for genomic and sub-genomic RNAs. Subsequently, the NiRAN domain transfers RNA to GDP, and forms the core cap structure GpppA-RNA. In terms of biological role, multi-functional protein with a zinc-binding domain in N-terminus displaying RNA and DNA duplex-unwinding activities with 5' to 3' polarity. Activity of helicase is dependent on magnesium. Plays a role in viral RNA synthesis through two distinct activities. The N7-guanine methyltransferase activity plays a role in the formation of the cap structure GpppA-RNA. The proofreading exoribonuclease reduces the sensitivity of the virus to RNA mutagens during replication. This activity acts on both ssRNA and dsRNA in a 3'-5' direction. Functionally, plays a role in viral transcription/replication and prevents the simultaneous activation of host cell dsRNA sensors, such as MDA5/IFIH1, OAS, and PKR. Acts by degrading the 5'-polyuridines generated during replication of the poly(A) region of viral genomic and subgenomic RNAs. Catalyzes a two-step reaction in which a 2'3'-cyclic phosphate (2'3'-cP) is first generated by 2'-O transesterification, which is then hydrolyzed to a 3'-phosphate (3'-P). If not degraded, poly(U) RNA would hybridize with poly(A) RNA tails and activate host dsRNA sensors. Its function is as follows. Methyltransferase that mediates mRNA cap 2'-O-ribose methylation to the 5'-cap structure of viral mRNAs. N7-methyl guanosine cap is a prerequisite for binding of nsp16. Therefore plays an essential role in viral mRNAs cap methylation which is essential to evade immune system. The polypeptide is Replicase polyprotein 1ab (rep) (Bat coronavirus HKU9 (BtCoV)).